The sequence spans 428 residues: Chaperone SurA (428 aa).

The N-terminal stretch at 1–19 (MNIWKTLLLGMLVTGSAVS) is a signal peptide. 2 PpiC domains span residues 170 to 268 (SVEY…KIED) and 277 to 377 (VTEV…EVLD).

The protein localises to the periplasm. It carries out the reaction [protein]-peptidylproline (omega=180) = [protein]-peptidylproline (omega=0). In terms of biological role, chaperone involved in the correct folding and assembly of outer membrane proteins. Recognizes specific patterns of aromatic residues and the orientation of their side chains, which are found more frequently in integral outer membrane proteins. May act in both early periplasmic and late outer membrane-associated steps of protein maturation. The polypeptide is Chaperone SurA (Vibrio vulnificus (strain CMCP6)).